Reading from the N-terminus, the 228-residue chain is Type II methyltransferase M.HhaII (228 aa).

It belongs to the N(4)/N(6)-methyltransferase family.

The enzyme catalyses a 2'-deoxyadenosine in DNA + S-adenosyl-L-methionine = an N(6)-methyl-2'-deoxyadenosine in DNA + S-adenosyl-L-homocysteine + H(+). In terms of biological role, a beta subtype methylase, recognizes the double-stranded sequence 5'-GANTC-3', methylates A-2 on both strands, and protects the DNA from cleavage by the HhaII endonuclease. This chain is Type II methyltransferase M.HhaII, found in Haemophilus parahaemolyticus.